The primary structure comprises 307 residues: 2-phospho-L-lactate transferase (307 aa).

7,8-didemethyl-8-hydroxy-5-deazariboflavin-binding residues include Asp48 and Lys87.

It belongs to the CofD family. In terms of assembly, homodimer. The cofactor is Mg(2+).

The enzyme catalyses (2S)-lactyl-2-diphospho-5'-guanosine + 7,8-didemethyl-8-hydroxy-5-deazariboflavin = oxidized coenzyme F420-0 + GMP + H(+). It functions in the pathway cofactor biosynthesis; coenzyme F420 biosynthesis. In terms of biological role, catalyzes the transfer of the 2-phospholactate moiety from (2S)-lactyl-2-diphospho-5'-guanosine to 7,8-didemethyl-8-hydroxy-5-deazariboflavin (FO) with the formation of oxidized coenzyme F420-0 and GMP. In Methanosarcina acetivorans (strain ATCC 35395 / DSM 2834 / JCM 12185 / C2A), this protein is 2-phospho-L-lactate transferase.